The sequence spans 28 residues: Conotoxin Cl5.3 (28 aa).

This sequence belongs to the conotoxin T superfamily. In terms of processing, contains 2 disulfide bonds that can be either 'C1-C3, C2-C4' or 'C1-C4, C2-C3', since these disulfide connectivities have been observed for conotoxins with cysteine framework V (for examples, see AC P0DQQ7 and AC P81755). As to expression, expressed by the venom duct.

Its subcellular location is the secreted. The protein is Conotoxin Cl5.3 of Californiconus californicus (California cone).